The primary structure comprises 354 residues: C-C chemokine receptor type 5 (354 aa).

Residues Met1 to Ala32 lie on the Extracellular side of the membrane. Ser6 carries an O-linked (GalNAc...) serine glycan. Tyr10, Tyr12, and Tyr16 each carry sulfotyrosine. Cystine bridges form between Cys22-Cys271 and Cys103-Cys180. A helical transmembrane segment spans residues Gln33–Cys60. The Cytoplasmic portion of the chain corresponds to Lys61 to Tyr70. The helical transmembrane segment at Leu71–Tyr91 threads the bilayer. Topologically, residues Ala92–Lys104 are extracellular. A helical membrane pass occupies residues Val105–Ile126. The Cytoplasmic portion of the chain corresponds to Asp127 to Thr143. A helical transmembrane segment spans residues Val144–Phe168. Residues Thr169 to Met200 are Extracellular-facing. A helical membrane pass occupies residues Val201–Leu220. At His221–Arg237 the chain is on the cytoplasmic side. The helical transmembrane segment at Leu238–Phe262 threads the bilayer. Residues Gln263–Gln279 lie on the Extracellular side of the membrane. Residues Ala280–Gly303 traverse the membrane as a helical segment. Residues Glu304–Leu354 are Cytoplasmic-facing. S-palmitoyl cysteine attachment occurs at residues Cys323 and Cys326. A phosphoserine; by BARK1 mark is found at Ser338, Ser339, Ser344, and Ser351.

This sequence belongs to the G-protein coupled receptor 1 family. Interacts with PRAF2. Efficient ligand binding to CCL3/MIP-1alpha and CCL4/MIP-1beta requires sulfation, O-glycosylation and sialic acid modifications. Glycosylation on Ser-6 is required for efficient binding of CCL4. Interacts with GRK2. Interacts with ARRB1 and ARRB2. Interacts with CNIH4. Interacts with S100A4; this interaction stimulates T-lymphocyte chemotaxis. In terms of processing, sulfated on at least 2 of the N-terminal tyrosines. Sulfation is required for efficient binding of the chemokines, CCL3 and CCL4. O-glycosylated, but not N-glycosylated. Ser-6 appears to be the major site. Also sialylated glycans present which contribute to chemokine binding. Post-translationally, palmitoylation in the C-terminal is important for cell surface expression. In terms of processing, phosphorylation on serine residues in the C-terminal is stimulated by binding CC chemokines especially by APO-RANTES.

It is found in the cell membrane. Its function is as follows. Receptor for a number of inflammatory CC-chemokines including CCL3/MIP-1-alpha, CCL4/MIP-1-beta and RANTES and subsequently transduces a signal by increasing the intracellular calcium ion level. May play a role in the control of granulocytic lineage proliferation or differentiation. Participates in T-lymphocyte migration to the infection site by acting as a chemotactic receptor. This chain is C-C chemokine receptor type 5 (Ccr5), found in Mus musculus (Mouse).